The primary structure comprises 156 residues: MRCPFCHSDNDKVQDSRTAEAGYVVRRKRLCQTCQRRFTTLEQIDALNVRVVKSDETREPFDREKIKRGIERACSKRAVTSDEIEKTVQKIEEAIYAEFDMEIPTATIGEVVLRKLATLDEVAYIRFASVYRDFDDAKDFLQIVSNLQRDAETEGR.

A zinc finger lies at 3-34 (CPFCHSDNDKVQDSRTAEAGYVVRRKRLCQTC). The 91-residue stretch at 49 to 139 (VRVVKSDETR…VYRDFDDAKD (91 aa)) folds into the ATP-cone domain.

Belongs to the NrdR family. Requires Zn(2+) as cofactor.

Its function is as follows. Negatively regulates transcription of bacterial ribonucleotide reductase nrd genes and operons by binding to NrdR-boxes. The polypeptide is Transcriptional repressor NrdR (Rhodopirellula baltica (strain DSM 10527 / NCIMB 13988 / SH1)).